Reading from the N-terminus, the 535-residue chain is Keratin, type II cytoskeletal 79 (535 aa).

Residues 1–12 are compositionally biased toward polar residues; the sequence is MRSSVSRQTYST. The segment at 1–52 is disordered; sequence MRSSVSRQTYSTKGGFSSNSASGGSGSQARTSFSSVTVSRSSGSGGGAHCGP. A head region spans residues 1–141; it reads MRSSVSRQTY…DPEIQRVRTQ (141 aa). The span at 32–42 shows a compositional bias: low complexity; sequence SFSSVTVSRSS. Over residues 43–52 the composition is skewed to gly residues; that stretch reads GSGGGAHCGP. A coil 1A region spans residues 142-177; sequence EREQIKTLNNKFASFIDKVRFLEQQNKVLETKWALL. Residues 142-457 enclose the IF rod domain; sequence EREQIKTLNN…KLLESEESRM (316 aa). The linker 1 stretch occupies residues 178–198; the sequence is QEQGQNLGVTRNNLEPLFEAY. The tract at residues 199–290 is coil 1B; sequence LGSMRSTLDR…QLYEMELSQV (92 aa). A linker 12 region spans residues 291-314; that stretch reads QTHVSNTNVVLSMDNNRNLDLDSI. The interval 315–453 is coil 2; that stretch reads IAEVKAQYEL…ATYRKLLESE (139 aa). The tract at residues 454–535 is tail; the sequence is ESRMSGECPS…TTVKTSSQRY (82 aa).

Belongs to the intermediate filament family. In terms of assembly, heterotetramer of two type I and two type II keratins. In terms of tissue distribution, expressed in skeletal muscle, skin and scalp, but not in any other tissues or organs examined.

The protein is Keratin, type II cytoskeletal 79 (KRT79) of Homo sapiens (Human).